A 449-amino-acid chain; its full sequence is Exodeoxyribonuclease 7 large subunit (449 aa).

This sequence belongs to the XseA family. As to quaternary structure, heterooligomer composed of large and small subunits.

It is found in the cytoplasm. It catalyses the reaction Exonucleolytic cleavage in either 5'- to 3'- or 3'- to 5'-direction to yield nucleoside 5'-phosphates.. Bidirectionally degrades single-stranded DNA into large acid-insoluble oligonucleotides, which are then degraded further into small acid-soluble oligonucleotides. This Aliivibrio fischeri (strain ATCC 700601 / ES114) (Vibrio fischeri) protein is Exodeoxyribonuclease 7 large subunit.